The chain runs to 500 residues: NAD(P)H-quinone oxidoreductase chain 4, chloroplastic (500 aa).

14 helical membrane passes run phenylalanine 4 to leucine 24, isoleucine 37 to leucine 57, valine 87 to valine 107, leucine 113 to serine 130, leucine 134 to methionine 154, phenylalanine 167 to leucine 187, isoleucine 211 to histidine 231, histidine 242 to isoleucine 262, alanine 272 to alanine 292, methionine 313 to leucine 333, glutamine 334 to aspartate 354, leucine 386 to threonine 406, leucine 417 to leucine 437, and leucine 462 to valine 482.

It belongs to the complex I subunit 4 family.

The protein resides in the plastid. It localises to the chloroplast thylakoid membrane. The enzyme catalyses a plastoquinone + NADH + (n+1) H(+)(in) = a plastoquinol + NAD(+) + n H(+)(out). The catalysed reaction is a plastoquinone + NADPH + (n+1) H(+)(in) = a plastoquinol + NADP(+) + n H(+)(out). This Agrostis stolonifera (Creeping bentgrass) protein is NAD(P)H-quinone oxidoreductase chain 4, chloroplastic.